The chain runs to 197 residues: Female-specific protein transformer (197 aa).

2 stretches are compositionally biased toward basic and acidic residues: residues 1-17 (MKMD…DSRG) and 24-39 (RERE…DSRK). Disordered stretches follow at residues 1 to 136 (MKMD…PKII) and 158 to 197 (GYQR…RPPY). 2 stretches are compositionally biased toward basic residues: residues 58 to 75 (RRLR…RSRS) and 84 to 127 (SRHR…RSPH). Residues 163–172 (PRPPPFPPAP) show a composition bias toward pro residues.

Its subcellular location is the nucleus speckle. In terms of biological role, member of the regulatory pathway controlling female somatic sexual differentiation, regulated by Sxl. Activates dsx female-specific splicing by promoting the formation of a splicing enhancer complex which consists of tra, tra2 and sr proteins. Together with tra-2, plays a role in switching fru splicing from the male-specific pattern to the female-specific pattern through activation of the female-specific fru 5'-splice site. No known function in males. This chain is Female-specific protein transformer (tra), found in Drosophila melanogaster (Fruit fly).